Here is a 446-residue protein sequence, read N- to C-terminus: Tubulin beta-6 chain (446 aa).

Residues 1–4 carry the MREI motif motif; sequence MREI. Residues Q11, E69, S138, G142, T143, and G144 each coordinate GTP. Mg(2+) is bound at residue E69. S172 is subject to Phosphoserine; by CDK1. GTP contacts are provided by N204 and N226. At E438 the chain carries 5-glutamyl polyglutamate.

It belongs to the tubulin family. In terms of assembly, dimer of alpha and beta chains. A typical microtubule is a hollow water-filled tube with an outer diameter of 25 nm and an inner diameter of 15 nM. Alpha-beta heterodimers associate head-to-tail to form protofilaments running lengthwise along the microtubule wall with the beta-tubulin subunit facing the microtubule plus end conferring a structural polarity. Microtubules usually have 13 protofilaments but different protofilament numbers can be found in some organisms and specialized cells. Mg(2+) serves as cofactor. In terms of processing, some glutamate residues at the C-terminus are polyglutamylated, resulting in polyglutamate chains on the gamma-carboxyl group. Polyglutamylation plays a key role in microtubule severing by spastin (SPAST). SPAST preferentially recognizes and acts on microtubules decorated with short polyglutamate tails: severing activity by SPAST increases as the number of glutamates per tubulin rises from one to eight, but decreases beyond this glutamylation threshold. Glutamylation is also involved in cilia motility. Some glutamate residues at the C-terminus are monoglycylated but not polyglycylated due to the absence of functional TTLL10 in human. Monoglycylation is mainly limited to tubulin incorporated into cilia and flagella axonemes, which is required for their stability and maintenance. Flagella glycylation controls sperm motility. Both polyglutamylation and monoglycylation can coexist on the same protein on adjacent residues, and lowering glycylation levels increases polyglutamylation, and reciprocally. Post-translationally, phosphorylated on Ser-172 by CDK1 during the cell cycle, from metaphase to telophase, but not in interphase. This phosphorylation inhibits tubulin incorporation into microtubules. As to expression, ubiquitous. Maximal expression in breast and lung, where it represents around 10% of all beta-tubulins. Largely decreased expression in most cancerous tissues.

Its subcellular location is the cytoplasm. It localises to the cytoskeleton. Tubulin is the major constituent of microtubules, a cylinder consisting of laterally associated linear protofilaments composed of alpha- and beta-tubulin heterodimers. Microtubules grow by the addition of GTP-tubulin dimers to the microtubule end, where a stabilizing cap forms. Below the cap, tubulin dimers are in GDP-bound state, owing to GTPase activity of alpha-tubulin. In Homo sapiens (Human), this protein is Tubulin beta-6 chain (TUBB6).